The chain runs to 372 residues: Glutamate 5-kinase (372 aa).

ATP is bound at residue Lys14. The substrate site is built by Ser54, Asp141, and Asn153. Position 173-174 (173-174 (TD)) interacts with ATP. Residues 280 to 358 (RGHVVIDDGA…GEIESVLGYM (79 aa)) enclose the PUA domain.

This sequence belongs to the glutamate 5-kinase family.

The protein localises to the cytoplasm. The enzyme catalyses L-glutamate + ATP = L-glutamyl 5-phosphate + ADP. It functions in the pathway amino-acid biosynthesis; L-proline biosynthesis; L-glutamate 5-semialdehyde from L-glutamate: step 1/2. In terms of biological role, catalyzes the transfer of a phosphate group to glutamate to form L-glutamate 5-phosphate. In Paraburkholderia phymatum (strain DSM 17167 / CIP 108236 / LMG 21445 / STM815) (Burkholderia phymatum), this protein is Glutamate 5-kinase.